The sequence spans 343 residues: uncharacterized protein (343 aa).

This is an uncharacterized protein from Tortricidae (ClGV).